We begin with the raw amino-acid sequence, 376 residues long: Protein-arginine rhamnosyltransferase (376 aa).

DTDP-beta-L-rhamnose contacts are provided by residues 13–16 (NYGD), Tyr192, 252–254 (MAQ), and 270–274 (RGEDS). 14–15 (YG) serves as a coordination point for dTDP. The Proton acceptor role is filled by Asp16. DTDP is bound by residues Tyr192, 252 to 254 (MAQ), and 270 to 274 (RGEDS). Residue Glu272 is part of the active site.

Belongs to the glycosyltransferase 104 family.

It carries out the reaction dTDP-beta-L-rhamnose + L-arginyl-[protein] = N(omega)-(alpha-L-rhamnosyl)-L-arginyl-[protein] + dTDP + H(+). Functionally, protein-arginine rhamnosyltransferase that catalyzes the transfer of a single rhamnose to elongation factor P (EF-P) on 'Lys-32', a modification required for EF-P-dependent rescue of polyproline stalled ribosomes. The chain is Protein-arginine rhamnosyltransferase from Pseudomonas aeruginosa (strain ATCC 15692 / DSM 22644 / CIP 104116 / JCM 14847 / LMG 12228 / 1C / PRS 101 / PAO1).